An 828-amino-acid chain; its full sequence is Outer membrane usher protein PmfC (828 aa).

The N-terminal stretch at 1-28 (MLIPYSPHTIWKTICATLLLSLAFFSQA) is a signal peptide.

Belongs to the fimbrial export usher family.

It is found in the cell outer membrane. In terms of biological role, involved in the export and assembly of PMF fimbrial subunits across the outer membrane. This chain is Outer membrane usher protein PmfC (pmfC), found in Proteus mirabilis (strain HI4320).